Consider the following 201-residue polypeptide: B-cell CLL/lymphoma 7 protein family member A (201 aa).

A disordered region spans residues 46-201 (YKWVPVTEPK…GKIDSSSEES (156 aa)). Basic and acidic residues predominate over residues 54–71 (PKSDDNKNKKKGKDDKYG). Polar residues-rich tracts occupy residues 73 to 83 (EVTTPENSSSP), 93 to 114 (SNQS…NTSP), and 133 to 142 (QYPSKQPSSG). A compositionally biased stretch (basic and acidic residues) spans 158 to 167 (TSKRDSKSQG). Polar residues predominate over residues 168–179 (DSESFLDSSKSA). Residues 192 to 201 (GKIDSSSEES) show a composition bias toward basic and acidic residues.

The protein belongs to the BCL7 family.

This is B-cell CLL/lymphoma 7 protein family member A (bcl7a) from Danio rerio (Zebrafish).